The following is a 394-amino-acid chain: Na(+)/H(+) antiporter NhaA (394 aa).

Transmembrane regions (helical) follow at residues 14 to 34, 59 to 79, 95 to 115, 125 to 145, 154 to 174, 179 to 199, 213 to 233, 254 to 274, 292 to 312, 328 to 348, and 363 to 383; these read AGGL…NSAL, LLLW…GLEV, VFPA…YLLF, GWAI…ALLG, VFLL…IALF, VSLQ…YMNW, LVLW…GVIV, GLHP…NAGV, IATG…WLAV, IFAV…IASL, and LGIL…LRLV.

The protein belongs to the NhaA Na(+)/H(+) (TC 2.A.33) antiporter family.

It localises to the cell inner membrane. The catalysed reaction is Na(+)(in) + 2 H(+)(out) = Na(+)(out) + 2 H(+)(in). Its function is as follows. Na(+)/H(+) antiporter that extrudes sodium in exchange for external protons. The polypeptide is Na(+)/H(+) antiporter NhaA (Yersinia pestis bv. Antiqua (strain Angola)).